The chain runs to 312 residues: Glyoxylate/hydroxypyruvate reductase A (312 aa).

Arg227 is a catalytic residue. The Proton donor role is filled by His275.

Belongs to the D-isomer specific 2-hydroxyacid dehydrogenase family. GhrA subfamily.

It localises to the cytoplasm. The catalysed reaction is glycolate + NADP(+) = glyoxylate + NADPH + H(+). It carries out the reaction (R)-glycerate + NAD(+) = 3-hydroxypyruvate + NADH + H(+). The enzyme catalyses (R)-glycerate + NADP(+) = 3-hydroxypyruvate + NADPH + H(+). In terms of biological role, catalyzes the NADPH-dependent reduction of glyoxylate and hydroxypyruvate into glycolate and glycerate, respectively. The protein is Glyoxylate/hydroxypyruvate reductase A of Escherichia coli O6:K15:H31 (strain 536 / UPEC).